A 332-amino-acid chain; its full sequence is Procathepsin L (332 aa).

A signal peptide spans 1–17 (MHPLLFLAGLCLGVASA). The propeptide at 18–112 (APQLYQSLDA…KVFQAPFFVE (95 aa)) is activation peptide. E121 provides a ligand contact to Zn(2+). Residue C137 is part of the active site. E162, D183, E198, and D208 together coordinate Zn(2+). C168 and C210 are joined by a disulfide. An N-linked (GlcNAc...) asparagine glycan is attached at N220. Zn(2+) is bound by residues D226, D249, D272, and D274. An intrachain disulfide couples C268 to C321. H275 is an active-site residue. The propeptide occupies 288-290 (ETE). N299 is a catalytic residue.

It belongs to the peptidase C1 family. As to quaternary structure, dimer of a heavy and a light chain linked by disulfide bonds. Interacts with Long isoform of CD74/Ii chain; the interaction stabilizes the conformation of mature CTSL. In terms of processing, during export along the endocytic pathway, pro-CTSL undergoes several proteolytic cleavages to generate the CTSL single-chain and two-chain mature forms, composed of a heavy chain linked to a light chain by disulfide bonds. Autocleavage; produces the single-chain CTSL after cleavage of the propeptide. The cleavage can be intermolecular. In terms of tissue distribution, expressed in the endometrium.

Its subcellular location is the lysosome. It is found in the apical cell membrane. The protein resides in the cytoplasmic vesicle. It localises to the secretory vesicle. The protein localises to the chromaffin granule. Its subcellular location is the secreted. It is found in the extracellular space. It catalyses the reaction Specificity close to that of papain. As compared to cathepsin B, cathepsin L exhibits higher activity toward protein substrates, but has little activity on Z-Arg-Arg-NHMec, and no peptidyl-dipeptidase activity.. Its activity is regulated as follows. Inhibited by the propeptide produced by autocleavage. Long isoform of CD74/Ii chain stabilizes the conformation of mature CTSL by binding to its active site and serving as a chaperone to help maintain a pool of mature enzyme in endocytic compartments and extracellular space of APCs. IFNG enhances the conversion into the CTSL mature and active form. Inhibited by CST6. Inhibited by the glycopeptide antibiotic teicoplanin. Inhibited by amantadine. Functionally, thiol protease important for the overall degradation of proteins in lysosomes. Plays a critical for normal cellular functions such as general protein turnover, antigen processing and bone remodeling. Involved in the solubilization of cross-linked TG/thyroglobulin and in the subsequent release of thyroid hormone thyroxine (T4) by limited proteolysis of TG/thyroglobulin in the thyroid follicle lumen. In neuroendocrine chromaffin cells secretory vesicles, catalyzes the prohormone proenkephalin processing to the active enkephalin peptide neurotransmitter. In thymus, regulates CD4(+) T cell positive selection by generating the major histocompatibility complex class II (MHCII) bound peptide ligands presented by cortical thymic epithelial cells. Also mediates invariant chain processing in cortical thymic epithelial cells. Major elastin-degrading enzyme at neutral pH. Accumulates as a mature and active enzyme in the extracellular space of antigen presenting cells (APCs) to regulate degradation of the extracellular matrix in the course of inflammation. Secreted form generates endostatin from COL18A1. Critical for cardiac morphology and function. Plays an important role in hair follicle morphogenesis and cycling, as well as epidermal differentiation. Required for maximal stimulation of steroidogenesis by TIMP1. This Felis catus (Cat) protein is Procathepsin L (CTSL).